Reading from the N-terminus, the 141-residue chain is Nucleoside diphosphate kinase (141 aa).

ATP-binding residues include Lys-11, Phe-59, Arg-87, Thr-93, Arg-104, and Asn-114. His-117 (pros-phosphohistidine intermediate) is an active-site residue.

The protein belongs to the NDK family. In terms of assembly, homotetramer. Requires Mg(2+) as cofactor.

The protein localises to the cytoplasm. It carries out the reaction a 2'-deoxyribonucleoside 5'-diphosphate + ATP = a 2'-deoxyribonucleoside 5'-triphosphate + ADP. It catalyses the reaction a ribonucleoside 5'-diphosphate + ATP = a ribonucleoside 5'-triphosphate + ADP. In terms of biological role, major role in the synthesis of nucleoside triphosphates other than ATP. The ATP gamma phosphate is transferred to the NDP beta phosphate via a ping-pong mechanism, using a phosphorylated active-site intermediate. The protein is Nucleoside diphosphate kinase of Pseudomonas putida (strain ATCC 47054 / DSM 6125 / CFBP 8728 / NCIMB 11950 / KT2440).